Here is a 193-residue protein sequence, read N- to C-terminus: ATP-dependent protease subunit HslV (193 aa).

Thr-12 is an active-site residue. Na(+) is bound by residues Ala-167, Cys-170, and Thr-173.

It belongs to the peptidase T1B family. HslV subfamily. In terms of assembly, a double ring-shaped homohexamer of HslV is capped on each side by a ring-shaped HslU homohexamer. The assembly of the HslU/HslV complex is dependent on binding of ATP.

It is found in the cytoplasm. The enzyme catalyses ATP-dependent cleavage of peptide bonds with broad specificity.. Allosterically activated by HslU binding. In terms of biological role, protease subunit of a proteasome-like degradation complex believed to be a general protein degrading machinery. The polypeptide is ATP-dependent protease subunit HslV (Bartonella quintana (strain Toulouse) (Rochalimaea quintana)).